The sequence spans 270 residues: 3-methyl-2-oxobutanoate hydroxymethyltransferase (270 aa).

Mg(2+) is bound by residues Asp48 and Asp87. 3-methyl-2-oxobutanoate contacts are provided by residues 48 to 49 (DS), Asp87, and Lys117. Residue Glu119 participates in Mg(2+) binding. Catalysis depends on Glu186, which acts as the Proton acceptor.

Belongs to the PanB family. In terms of assembly, homodecamer; pentamer of dimers. Mg(2+) is required as a cofactor.

Its subcellular location is the cytoplasm. The catalysed reaction is 3-methyl-2-oxobutanoate + (6R)-5,10-methylene-5,6,7,8-tetrahydrofolate + H2O = 2-dehydropantoate + (6S)-5,6,7,8-tetrahydrofolate. The protein operates within cofactor biosynthesis; (R)-pantothenate biosynthesis; (R)-pantoate from 3-methyl-2-oxobutanoate: step 1/2. Functionally, catalyzes the reversible reaction in which hydroxymethyl group from 5,10-methylenetetrahydrofolate is transferred onto alpha-ketoisovalerate to form ketopantoate. This is 3-methyl-2-oxobutanoate hydroxymethyltransferase from Synechococcus sp. (strain RCC307).